Consider the following 500-residue polypeptide: Chromosomal replication initiator protein DnaA (500 aa).

Residues 1–81 (MVNASGDPVI…LQALRTVTGE (81 aa)) are domain I, interacts with DnaA modulators. Positions 81–155 (ENMFPAFKVV…QQKMNRDPET (75 aa)) are domain II. Residues 156 to 377 (HLNKNFTFDS…GALTRVTAVA (222 aa)) are domain III, AAA+ region. ATP-binding residues include G200, G202, K203, and T204. Residues 378 to 500 (SLSNQPVTRA…TVRLKQSNTN (123 aa)) are domain IV, binds dsDNA.

This sequence belongs to the DnaA family. As to quaternary structure, oligomerizes as a right-handed, spiral filament on DNA at oriC.

It is found in the cytoplasm. Its function is as follows. Plays an essential role in the initiation and regulation of chromosomal replication. ATP-DnaA binds to the origin of replication (oriC) to initiate formation of the DNA replication initiation complex once per cell cycle. Binds the DnaA box (a 9 base pair repeat at the origin) and separates the double-stranded (ds)DNA. Forms a right-handed helical filament on oriC DNA; dsDNA binds to the exterior of the filament while single-stranded (ss)DNA is stabiized in the filament's interior. The ATP-DnaA-oriC complex binds and stabilizes one strand of the AT-rich DNA unwinding element (DUE), permitting loading of DNA polymerase. After initiation quickly degrades to an ADP-DnaA complex that is not apt for DNA replication. Binds acidic phospholipids. The protein is Chromosomal replication initiator protein DnaA of Bifidobacterium longum (strain DJO10A).